Consider the following 198-residue polypeptide: Guanine nucleotide-binding protein subunit alpha-11 (198 aa).

Residues 1–11 are G1 motif; it reads LLGTGESGKST. One can recognise a G-alpha domain in the interval 1 to 198; the sequence is LLGTGESGKS…LSEYDHVLVE (198 aa). Residues 3 to 10 and 137 to 140 contribute to the GTP site; these read GTGESGKS and LRVR. Serine 10 is a Mg(2+) binding site. Positions 135–143 are G2 motif; sequence DVLRVRVPT. Threonine 143 is a Mg(2+) binding site. The segment at 158-167 is G3 motif; sequence FRMVDVGGQR.

It belongs to the G-alpha family. G(q) subfamily. As to quaternary structure, g proteins are composed of 3 units; alpha, beta and gamma. The alpha chain contains the guanine nucleotide binding site. Interacts with RGS22. Interacts with NTSR1.

It localises to the cell membrane. The protein localises to the cytoplasm. The catalysed reaction is GTP + H2O = GDP + phosphate + H(+). Its function is as follows. Guanine nucleotide-binding proteins (G proteins) function as transducers downstream of G protein-coupled receptors (GPCRs) in numerous signaling cascades. The alpha chain contains the guanine nucleotide binding site and alternates between an active, GTP-bound state and an inactive, GDP-bound state. Signaling by an activated GPCR promotes GDP release and GTP binding. The alpha subunit has a low GTPase activity that converts bound GTP to GDP, thereby terminating the signal. Both GDP release and GTP hydrolysis are modulated by numerous regulatory proteins. Signaling is mediated via phospholipase C-beta-dependent inositol lipid hydrolysis for signal propagation: activates phospholipase C-beta: following GPCR activation, GNA11 activates PLC-beta (PLCB1, PLCB2, PLCB3 or PLCB4), leading to production of diacylglycerol (DAG) and inositol 1,4,5-trisphosphate (IP3). Transduces FFAR4 signaling in response to long-chain fatty acids (LCFAs). Together with GNAQ, required for heart development. In the respiratory epithelium, transmits OXGR1-dependent signals that lead to downstream intracellular Ca(2+) release and mucocilliary clearance of airborne pathogens. The chain is Guanine nucleotide-binding protein subunit alpha-11 (GNA11) from Canis lupus familiaris (Dog).